The chain runs to 565 residues: Urocanate hydratase (565 aa).

NAD(+) contacts are provided by residues 58–59 (GG), Q136, 182–184 (GMG), E202, R207, 245–246 (NA), 266–270 (QTSAH), 276–277 (YL), and Y325. The active site involves C413. An NAD(+)-binding site is contributed by G495.

It belongs to the urocanase family. It depends on NAD(+) as a cofactor.

The protein resides in the cytoplasm. The enzyme catalyses 4-imidazolone-5-propanoate = trans-urocanate + H2O. The protein operates within amino-acid degradation; L-histidine degradation into L-glutamate; N-formimidoyl-L-glutamate from L-histidine: step 2/3. Functionally, catalyzes the conversion of urocanate to 4-imidazolone-5-propionate. The sequence is that of Urocanate hydratase from Vibrio vulnificus (strain CMCP6).